The following is a 650-amino-acid chain: A-kinase anchor protein 10, mitochondrial (650 aa).

A mitochondrion-targeting transit peptide spans 1–16; sequence RALRPDPGPAMSFFRR. 2 disordered regions span residues 1–45 and 168–192; these read RALR…QKST and SSLA…ESLD. Residue serine 40 is modified to Phosphoserine. RGS domains follow at residues 113-356 and 366-493; these read TLEQ…CKYQ and YLAD…YKYL. Residue serine 268 is modified to Phosphoserine. A disordered region spans residues 512–535; the sequence is LAAQGSGGPPDDPLPGASDPSASQ. Residues 525-535 are compositionally biased toward low complexity; the sequence is LPGASDPSASQ. The segment at 622–635 is PKA-RII subunit binding; the sequence is LAWKIAKMIVSDVM.

The protein localises to the mitochondrion. It localises to the membrane. The protein resides in the cytoplasm. Differentially targeted protein that binds to type I and II regulatory subunits of protein kinase A and anchors them to the mitochondria or the plasma membrane. Although the physiological relevance between PKA and AKAPS with mitochondria is not fully understood, one idea is that BAD, a proapoptotic member, is phosphorylated and inactivated by mitochondria-anchored PKA. It cannot be excluded too that it may facilitate PKA as well as G protein signal transduction, by acting as an adapter for assembling multiprotein complexes. With its RGS domain, it could lead to the interaction to G-alpha proteins, providing a link between the signaling machinery and the downstream kinase. This Sus scrofa (Pig) protein is A-kinase anchor protein 10, mitochondrial (AKAP10).